Reading from the N-terminus, the 309-residue chain is NAD kinase (309 aa).

The active-site Proton acceptor is Asp-89. NAD(+) is bound by residues 89–90 (DG), 163–164 (NE), His-174, Arg-191, Asp-193, and 204–209 (TAYSLS).

Belongs to the NAD kinase family. A divalent metal cation is required as a cofactor.

Its subcellular location is the cytoplasm. It catalyses the reaction NAD(+) + ATP = ADP + NADP(+) + H(+). Involved in the regulation of the intracellular balance of NAD and NADP, and is a key enzyme in the biosynthesis of NADP. Catalyzes specifically the phosphorylation on 2'-hydroxyl of the adenosine moiety of NAD to yield NADP. This Shewanella piezotolerans (strain WP3 / JCM 13877) protein is NAD kinase.